A 467-amino-acid polypeptide reads, in one-letter code: GTPase Der (467 aa).

EngA-type G domains are found at residues 25–188 and 199–372; these read PVVA…PEAP and RRVA…ASWE. GTP-binding positions include 31-38, 78-82, 140-143, 205-212, 252-256, and 317-320; these read GRPNVGKS, DTGGW, NKAD, DTAGL, and NKWD. A KH-like domain is found at 373–455; that stretch reads TRVPTAQLNA…PIEIAVRPRK (83 aa).

It belongs to the TRAFAC class TrmE-Era-EngA-EngB-Septin-like GTPase superfamily. EngA (Der) GTPase family. As to quaternary structure, associates with the 50S ribosomal subunit.

GTPase that plays an essential role in the late steps of ribosome biogenesis. The polypeptide is GTPase Der (Salinispora arenicola (strain CNS-205)).